A 108-amino-acid polypeptide reads, in one-letter code: Resistin (108 aa).

An N-terminal signal peptide occupies residues 1–18; that stretch reads MKALCLLLLPVLGLLVSS. Cystine bridges form between Cys-51/Cys-104, Cys-63/Cys-103, Cys-72/Cys-89, Cys-74/Cys-91, and Cys-78/Cys-93.

It belongs to the resistin/FIZZ family. Homodimer; disulfide-linked. Interacts with DEFA1. In terms of tissue distribution, expressed in white adipose tissue (at protein level). Widely expressed, with particularly strong expression in lung, bone marrow, breast and peripheral blood. Expressed strongly in bone marrow and at lower levels in lung, but not detected in other tissues. Isoform 2 is detected in adipose tissue, bone marrow, brain, lung, peripheral blood, placenta and thymus.

It localises to the secreted. In terms of biological role, hormone that seems to suppress insulin ability to stimulate glucose uptake into adipose cells. Potentially links obesity to diabetes. Promotes chemotaxis in myeloid cells. The chain is Resistin (RETN) from Homo sapiens (Human).